Reading from the N-terminus, the 921-residue chain is MMKWFAKLILSLSLAVVMAASSAAISFGASNSSLDTHASLVTQLDSAASEAAEGKSAMINESAINSNVTGWKLHGKGRMEVTGEGLRLTSDPQENVMAISETVADDFIYEADVMVTDPQADATLLFRSGEDGWSSYMLQLALGAGVIRLKDASGGEGVLNVERKVEAKPGDIYHLRVKAEGTRLQVYWGQQYEPVIDTEAAAHRTGRLGLHVWNGSALFQNIRVSDMSGNTLEPISSQGLWQPDLKGLKGTGEDGLEAKKVFRNHEADVVLEGDLILNGQGSAGLLFRSNAQGTEGYAAVLQGEGERVRVYLKKADGTILHESRVTYPSQRESRHHLEVKAIGERIQIFVDGYEPAAIDMVDTAFPSGYHGVMASSGIAYFQDVYITPYASYYTEKYRPQYHYSPIRGSASDPNGLVYFEGEYHLFHQDGGQWAHAVSRDLIHWKRLPIALPWNDLGHVWSGSAVADTTNASGLFGSSGGKGLIAYYTSYNPDRHNGNQKIGLAYSTDRGRTWKYSEEHPVVIENPGKTGEDPGGWDFRDPKVVRDEANNRWVMVVSGGDHIRLFTSTNLLNWTLTDQFGYGAYIRGGVWECPDLFQLPVEGSKKRKWVLMISTGANPNTQGSDAEYFIGDLTPEGKFINDNPAGTVLKTDWGKEYYASMSFSDMPDGRRIMLAWMTNWDYPFSFPTTGWKGQLSIPRQVSLKETEEGIRMHQTPIEELAQLRSPVLTSPTARWGTSGENLLKGITSGAYEIEAELELPPTGAASEFGFRLREGDGQRTLVGYRAAGSKMFVDRSASGMTDFSDLFSTLHEAPLKPEGNRIKLRILVDESSVEVFGNDGRVVFSDVIFPDPASRGMSFYSEGGKVKVVSLQVHALQHIWREDEAKEPRVVMDTETLELSLGQTKPLFASIDNGQGKGADGI.

The N-terminal stretch at 1–23 (MMKWFAKLILSLSLAVVMAASSA) is a signal peptide. Residues 409–412 (SASD), Gln428, 460–461 (WS), 539–540 (RD), Glu591, and Trp679 contribute to the substrate site. Asp412 is a catalytic residue.

It belongs to the glycosyl hydrolase 32 family.

Its subcellular location is the secreted. It catalyses the reaction Random hydrolysis of (2-&gt;6)-beta-D-fructofuranosidic linkages in (2-&gt;6)-beta-D-fructans (levans) containing more than 3 fructose units.. Is completely inhibited by low concentrations of heavy metal ions, while Ca(2+) and Mg(2+) or chelating agents such as EDTA neither inhibit nor activate the enzyme to any significant extent. Its function is as follows. Catalyzes the hydrolysis of levan with endo-type specificity. The products of levan hydrolysis are a mixture of fructose and a series of fructooligosaccharides up to 12-mer, with levantriose being the major oligosaccharide obtained. Is not active towards sucrose. This is Levanase from Bacillus sp. (strain L7).